The primary structure comprises 1088 residues: RNA-directed RNA polymerase (1088 aa).

The RdRp catalytic domain occupies 501–687 (LSYGDVTRFL…AKRYIAGGKI (187 aa)).

Belongs to the reoviridae RNA-directed RNA polymerase family. In terms of assembly, interacts with VP3 (Potential). Interacts with VP2; this interaction activates VP1. Interacts with NSP5; this interaction is probably necessary for the formation of functional virus factories. Interacts with NSP2; this interaction is weak. Mg(2+) serves as cofactor.

The protein resides in the virion. The enzyme catalyses RNA(n) + a ribonucleoside 5'-triphosphate = RNA(n+1) + diphosphate. RNA-directed RNA polymerase that is involved in both transcription and genome replication. Together with VP3 capping enzyme, forms an enzyme complex positioned near the channels situated at each of the five-fold vertices of the core. Following infection, the outermost layer of the virus is lost, leaving a double-layered particle (DLP) made up of the core and VP6 shell. VP1 then catalyzes the transcription of fully conservative plus-strand genomic RNAs that are extruded through the DLP's channels into the cytoplasm where they function as mRNAs for translation of viral proteins. One copy of each of the viral (+)RNAs is also recruited during core assembly, together with newly synthesized polymerase complexes and VP2. The polymerase of these novo-formed particles catalyzes the synthesis of complementary minus-strands leading to dsRNA formation. To do so, the polymerase specifically recognizes and binds 4 bases 5'-UGUG-3' in the conserved 3'-sequence of plus-strand RNA templates. VP2 presumably activates the autoinhibited VP1-RNA complex to coordinate packaging and genome replication. Once dsRNA synthesis is complete, the polymerase switches to the transcriptional mode, thus providing secondary transcription. The protein is RNA-directed RNA polymerase of Homo sapiens (Human).